The following is a 124-amino-acid chain: Hydrogenase maturation factor HypA (124 aa).

His-2 contacts Ni(2+). Zn(2+) contacts are provided by Cys-78, Cys-81, Cys-97, and Cys-100.

The protein belongs to the HypA/HybF family.

In terms of biological role, involved in the maturation of [NiFe] hydrogenases. Required for nickel insertion into the metal center of the hydrogenase. This chain is Hydrogenase maturation factor HypA, found in Methanococcus vannielii (strain ATCC 35089 / DSM 1224 / JCM 13029 / OCM 148 / SB).